The following is a 780-amino-acid chain: MTPEFDEEVVFENSPLYQYLQDLGHTDFEICSSSSPKPEKCLTTEGPQPPPTRVLQRQGILLKLTETIKSWTFSSQHSKKDDLLHKLDTGFRLDSLHTILQQEVLLQEDVELLELLDASILSAGQPQQESGHLPTLCSLATPNTWDVSLLFAFISLLIMFPTCWIVSSWLVWGIILFLYLIIRVLKLWRTAKLQMTLKKYRVRLEDMAANSRAFTNLVRKSLRLIQETEVISRGFTLVSAACSFNKAAQHPGQHLIGLRKAVYRTVRANFQAARLATLYMLKNYPLNSESDNVTNYICVVPFKELGLGLSEDQISEEEARNLTDGFSLPALKVLFQLWVAQSSEFFRRLALLLSTANSPSGPLLTAALLPHHILCDVTQGLPHAHSACLDELKRSYEFFRYFETQHQSVPQRLSKTPQKSRELSNVHTAVRSLQLHLKALLNEVIILEDELEKLVCTKETQELLSEAYPILEQKLKLIEPHVQASNSCWEEAISQVDKLLRRNTDKKGKPGVACENPHCTAEPLVRPALHIEDRDPIPEEQELEAYVDDIDIESEFRKDDFYHLSQEDRERQKREQEESRRVLQELKSVLGFKASEAERQKWKQLLFSDHAVLTSLSPVDPVESVSNSEPPMNSDTEKVNSNATEEETSKPCAGDKEDSRTEYVCDSPTEGPSKDTSADTGLLLPGAEETMCHQHESEAKSPQAAAAGATAPPTPRDTLQLSIKQRLARLQLPPEFTFSAGLAAEVAARSLSFTTMQEQTFGDEEEEQLVEGGENEVEEK.

2 helical membrane-spanning segments follow: residues 140-160 (ATPN…LIMF) and 162-182 (TCWI…YLII). Residues 430 to 467 (VRSLQLHLKALLNEVIILEDELEKLVCTKETQELLSEA) adopt a coiled-coil conformation. Disordered regions lie at residues 620–718 (DPVE…PRDT) and 757–780 (QEQT…VEEK). Residues 624-643 (SVSNSEPPMNSDTEKVNSNA) are compositionally biased toward polar residues. Composition is skewed to basic and acidic residues over residues 647 to 663 (ETSK…RTEY) and 690 to 699 (TMCHQHESEA). Low complexity predominate over residues 702 to 711 (PQAAAAGATA). A compositionally biased stretch (acidic residues) spans 761–780 (FGDEEEEQLVEGGENEVEEK).

This sequence belongs to the vezatin family. Interacts with USH2A (via the cytoplasmic region); the interaction associates VEZT with the USH2 complex at the stereocilia base. Interacts with myosin MYO7A and the cadherin-catenins complex. As to expression, expressed in developing cochlear hair cells. Isoform 1, isoform 2 and isoform 3 are expressed in testis. In the seminiferous epithelium, present exclusively in the acrosome of spermatids (at protein level).

The protein localises to the cell membrane. It localises to the cell projection. The protein resides in the stereocilium membrane. It is found in the cell junction. Its subcellular location is the adherens junction. The protein localises to the nucleus. It localises to the cytoplasmic vesicle. The protein resides in the secretory vesicle. It is found in the acrosome. Its function is as follows. Plays a pivotal role in the establishment of adherens junctions and their maintenance in adult life. Required for morphogenesis of the preimplantation embryo, and for the implantation process. The sequence is that of Vezatin from Mus musculus (Mouse).